A 255-amino-acid chain; its full sequence is Small ribosomal subunit protein eS1B (255 aa).

Ala2 is subject to N-acetylalanine; partial. Residue Ser245 is modified to Phosphoserine. Lys248 participates in a covalent cross-link: Glycyl lysine isopeptide (Lys-Gly) (interchain with G-Cter in ubiquitin). Thr254 carries the phosphothreonine modification.

The protein belongs to the eukaryotic ribosomal protein eS1 family. As to quaternary structure, component of the small ribosomal subunit. Mature ribosomes consist of a small (40S) and a large (60S) subunit. The 40S subunit contains about 33 different proteins and 1 molecule of RNA (18S). The 60S subunit contains about 49 different proteins and 3 molecules of RNA (25S, 5.8S and 5S).

It localises to the cytoplasm. The sequence is that of Small ribosomal subunit protein eS1B from Saccharomyces cerevisiae (strain JAY291) (Baker's yeast).